Here is a 380-residue protein sequence, read N- to C-terminus: Deoxyguanosinetriphosphate triphosphohydrolase-like protein (380 aa).

An HD domain is found at arginine 79–threonine 196.

The protein belongs to the dGTPase family. Type 2 subfamily.

This chain is Deoxyguanosinetriphosphate triphosphohydrolase-like protein, found in Deinococcus deserti (strain DSM 17065 / CIP 109153 / LMG 22923 / VCD115).